Reading from the N-terminus, the 602-residue chain is Elongation factor 4 (602 aa).

The tr-type G domain maps to 7–189 (KRVRNFSIIA…AVVEKVPYPK (183 aa)). GTP-binding positions include 19-24 (DHGKST) and 136-139 (NKID).

It belongs to the TRAFAC class translation factor GTPase superfamily. Classic translation factor GTPase family. LepA subfamily.

It is found in the cell membrane. It carries out the reaction GTP + H2O = GDP + phosphate + H(+). Functionally, required for accurate and efficient protein synthesis under certain stress conditions. May act as a fidelity factor of the translation reaction, by catalyzing a one-codon backward translocation of tRNAs on improperly translocated ribosomes. Back-translocation proceeds from a post-translocation (POST) complex to a pre-translocation (PRE) complex, thus giving elongation factor G a second chance to translocate the tRNAs correctly. Binds to ribosomes in a GTP-dependent manner. This Clostridium tetani (strain Massachusetts / E88) protein is Elongation factor 4.